Here is a 338-residue protein sequence, read N- to C-terminus: Solute carrier family 35 member G5 (338 aa).

Residues 1–21 are disordered; it reads MAGSHPYFNLPDSTHPSPPSA. Helical transmembrane passes span 37–57, 67–87, 105–125, 160–180, 190–210, 221–241, 250–270, 281–301, and 305–325; these read TNGLLVALLGGGLPAGFVGPL, LPSLELLICRCLFHLPIALPL, CFCALLNVLSIGCAYSAVQVV, CGLLGSILGLIIIVGPGLWTL, ALGYVQAFLGGLALSLGLLVY, TVAFLSGLVGLLGSVPGLFVL, LLSWSCVGAVGILALVSFTCV, LVCAVLHSEVVVALILQYYVL, and VAPSDIMGAGIVLGSIAIITA. An EamA 1 domain is found at 49-174; it reads LPAGFVGPLS…SILGLIIIVG (126 aa). Residues 272–325 enclose the EamA 2 domain; that stretch reads YAVTKAHPALVCAVLHSEVVVALILQYYVLHETVAPSDIMGAGIVLGSIAIITA.

Belongs to the SLC35G solute transporter family.

Its subcellular location is the membrane. The protein is Solute carrier family 35 member G5 (SLC35G5) of Pan troglodytes (Chimpanzee).